We begin with the raw amino-acid sequence, 87 residues long: U3-theraphotoxin-Cg1b (87 aa).

Residues 1–23 (MRTFTLIAILTCAVLVIFHVSAA) form the signal peptide. Positions 24-48 (EELEAQDVIQPEDIFTGVATLEEDR) are excised as a propeptide. 3 disulfides stabilise this stretch: Cys52–Cys65, Cys56–Cys79, and Cys73–Cys84.

Belongs to the neurotoxin 12 (Hwtx-2) family. 03 (juruin) subfamily. As to expression, expressed by the venom gland.

It localises to the secreted. Functionally, probable ion channel inhibitor. The chain is U3-theraphotoxin-Cg1b from Chilobrachys guangxiensis (Chinese earth tiger tarantula).